The sequence spans 390 residues: LIM/homeobox protein Lhx4 (390 aa).

LIM zinc-binding domains are found at residues 28–87 (PQCA…RFGT) and 88–150 (KCTA…AKQN). Residues 157–216 (AKRPRTTITAKQLETLKNAYKNSPKPARHVREQLSSETGLDMRVVQVWFQNRRAKEKRLK) constitute a DNA-binding region (homeobox). The segment at 161-181 (RTTITAKQLETLKNAYKNSPK) is interaction with DNA. The interval 199 to 211 (RVVQVWFQNRRAK) is interaction with 5-mCpG DNA. Disordered regions lie at residues 231–253 (VKRSRGGSKQEKESSAEDCGVSD) and 355–390 (MAGGPTSDLSTGSSVGYPDFPTSPASWLDEMDHPPF).

In terms of tissue distribution, transient expression in ventrolateral regions of the developing neural tube and hindbrain.

It localises to the nucleus. Functionally, may play a critical role in the development of respiratory control mechanisms and in the normal growth and maturation of the lung. Binds preferentially to methylated DNA. This chain is LIM/homeobox protein Lhx4 (Lhx4), found in Mus musculus (Mouse).